A 283-amino-acid chain; its full sequence is Pantothenate synthetase (283 aa).

26 to 33 provides a ligand contact to ATP; it reads MGNLHEGH. H33 serves as the catalytic Proton donor. Q57 contributes to the (R)-pantoate binding site. Position 57 (Q57) interacts with beta-alanine. 148-151 contributes to the ATP binding site; that stretch reads GKKD. Residue Q154 participates in (R)-pantoate binding. Position 185-188 (185-188) interacts with ATP; that stretch reads LSSR.

Belongs to the pantothenate synthetase family. Homodimer.

The protein resides in the cytoplasm. It carries out the reaction (R)-pantoate + beta-alanine + ATP = (R)-pantothenate + AMP + diphosphate + H(+). Its pathway is cofactor biosynthesis; (R)-pantothenate biosynthesis; (R)-pantothenate from (R)-pantoate and beta-alanine: step 1/1. Functionally, catalyzes the condensation of pantoate with beta-alanine in an ATP-dependent reaction via a pantoyl-adenylate intermediate. This Polaromonas naphthalenivorans (strain CJ2) protein is Pantothenate synthetase.